A 267-amino-acid chain; its full sequence is Alpha carbonic anhydrase 4 (267 aa).

The signal sequence occupies residues 1 to 26 (MDTNAKTIFFMAMCFIYLSFPNISHA). Asn22 carries an N-linked (GlcNAc...) asparagine glycan. An Alpha-carbonic anhydrase domain is found at 34 to 264 (TPFTYEQKTE…SKGRSVWFYD (231 aa)). A disulfide bridge links Cys59 with Cys214. The active-site Proton acceptor is His99. The Zn(2+) site is built by His125 and His127. Asn135 is a glycosylation site (N-linked (GlcNAc...) asparagine). Residue His144 participates in Zn(2+) binding. Position 210 to 211 (210 to 211 (TV)) interacts with substrate.

Belongs to the alpha-class carbonic anhydrase family. The cofactor is Zn(2+). N-glycosylated.

It localises to the plastid. The protein localises to the chloroplast stroma. It carries out the reaction hydrogencarbonate + H(+) = CO2 + H2O. Functionally, reversible hydration of carbon dioxide. This is Alpha carbonic anhydrase 4 (ACA4) from Arabidopsis thaliana (Mouse-ear cress).